The sequence spans 164 residues: Shikimate kinase (164 aa).

Position 10–15 (10–15 (GVGKTT)) interacts with ATP. Thr14 is a Mg(2+) binding site. Asp28, Arg52, and Gly75 together coordinate substrate. Residue Arg116 participates in ATP binding. Arg134 provides a ligand contact to substrate. An ATP-binding site is contributed by Arg151.

It belongs to the shikimate kinase family. As to quaternary structure, monomer. Mg(2+) serves as cofactor.

It localises to the cytoplasm. The catalysed reaction is shikimate + ATP = 3-phosphoshikimate + ADP + H(+). The protein operates within metabolic intermediate biosynthesis; chorismate biosynthesis; chorismate from D-erythrose 4-phosphate and phosphoenolpyruvate: step 5/7. Catalyzes the specific phosphorylation of the 3-hydroxyl group of shikimic acid using ATP as a cosubstrate. This Streptococcus equi subsp. zooepidemicus (strain MGCS10565) protein is Shikimate kinase.